Here is a 431-residue protein sequence, read N- to C-terminus: Salivary plasminogen activator beta (431 aa).

The first 36 residues, 1-36 (MVNTMKTKLLCVLLLCGAVFSLPRQETYRQLARGSR), serve as a signal peptide directing secretion. The EGF-like domain occupies 37 to 75 (AYGGCSELRCFNGGTCWQAASFSDFVCQCPKGYTGKQCE). Disulfide bonds link Cys-41-Cys-52, Cys-46-Cys-63, Cys-65-Cys-74, Cys-82-Cys-163, Cys-103-Cys-145, Cys-134-Cys-158, Cys-168-Cys-299, Cys-211-Cys-227, Cys-219-Cys-288, Cys-313-Cys-388, Cys-345-Cys-361, and Cys-378-Cys-406. The 82-residue stretch at 82-163 (CYKDQGVTYR…ILEFCSVPVC (82 aa)) folds into the Kringle domain. Asn-139 is a glycosylation site (N-linked (GlcNAc...) asparagine). The Peptidase S1 domain occupies 180-430 (STGGLFTDIT…YLGWIRDNMR (251 aa)). Catalysis depends on charge relay system residues His-226 and Asp-275. Asn-352 carries an N-linked (GlcNAc...) asparagine glycan. Ser-382 functions as the Charge relay system in the catalytic mechanism.

Belongs to the peptidase S1 family. As to quaternary structure, monomer.

The protein localises to the secreted. The catalysed reaction is Specific cleavage of Arg-|-Val bond in plasminogen to form plasmin.. In terms of biological role, probably essential to support the feeding habits of this exclusively haematophagous animal. Probable potent thrombolytic agent. This chain is Salivary plasminogen activator beta, found in Desmodus rotundus (Vampire bat).